The primary structure comprises 189 residues: Elongation factor P (189 aa).

This sequence belongs to the elongation factor P family.

Its subcellular location is the cytoplasm. The protein operates within protein biosynthesis; polypeptide chain elongation. Functionally, involved in peptide bond synthesis. Stimulates efficient translation and peptide-bond synthesis on native or reconstituted 70S ribosomes in vitro. Probably functions indirectly by altering the affinity of the ribosome for aminoacyl-tRNA, thus increasing their reactivity as acceptors for peptidyl transferase. The protein is Elongation factor P of Rhizobium meliloti (strain 1021) (Ensifer meliloti).